The primary structure comprises 89 residues: Small ribosomal subunit protein uS15 (89 aa).

It belongs to the universal ribosomal protein uS15 family. As to quaternary structure, part of the 30S ribosomal subunit. Forms a bridge to the 50S subunit in the 70S ribosome, contacting the 23S rRNA.

Functionally, one of the primary rRNA binding proteins, it binds directly to 16S rRNA where it helps nucleate assembly of the platform of the 30S subunit by binding and bridging several RNA helices of the 16S rRNA. Forms an intersubunit bridge (bridge B4) with the 23S rRNA of the 50S subunit in the ribosome. This Pseudoalteromonas atlantica (strain T6c / ATCC BAA-1087) protein is Small ribosomal subunit protein uS15.